The chain runs to 540 residues: CWF19-like protein 1 (540 aa).

The tract at residues Glu-265–Pro-326 is disordered. Positions Pro-267–Lys-277 are enriched in basic and acidic residues.

Belongs to the CWF19 family.

The polypeptide is CWF19-like protein 1 (cwf19l1) (Xenopus laevis (African clawed frog)).